We begin with the raw amino-acid sequence, 108 residues long: Structural protein 1 (108 aa).

Residues 1-20 form a disordered region; it reads MSRVSEYGVPEGVRESDSDT. The Intravirion portion of the chain corresponds to 1–77; sequence MSRVSEYGVP…LKMQMDRLCN (77 aa). Residues 78–98 traverse the membrane as a helical; Signal-anchor for type II membrane protein segment; that stretch reads VLGVVLQMATLALVTYIAFVV. Residues 99 to 108 are Virion surface-facing; the sequence is HTRATSCKRE.

It belongs to the varicellovirus ORF1 protein family. In terms of assembly, homodimer. In terms of processing, phosphorylated.

The protein localises to the virion membrane. The protein resides in the host Golgi apparatus membrane. This chain is Structural protein 1, found in Varicella-zoster virus (strain Dumas) (HHV-3).